We begin with the raw amino-acid sequence, 338 residues long: Protein SGT1 homolog (338 aa).

At Ala2 the chain carries N-acetylalanine. 3 TPR repeats span residues Ala11–Asp45, Ala46–Ser79, and Ser80–Asp113. The region spanning Gln142–Glu231 is the CS domain. The SGS domain occupies Leu249–Tyr338. Position 254 is a phosphoserine (Ser254). Residue Thr257 is modified to Phosphothreonine. Lys268 is covalently cross-linked (Glycyl lysine isopeptide (Lys-Gly) (interchain with G-Cter in SUMO1); alternate). Residue Lys268 forms a Glycyl lysine isopeptide (Lys-Gly) (interchain with G-Cter in SUMO2); alternate linkage. Ser304 is modified (phosphoserine).

The protein belongs to the SGT1 family. Probably associates with SCF (SKP1-CUL1-F-box protein) complex through interaction with SKP1. Interacts with S100A6. Interacts with HSP90. In terms of processing, phosphorylated at Ser-254 and Ser-304, dephosphorylation promotes nuclear translocation, most likely due to disruption of the SUGT1-HSP90 complex.

It localises to the cytoplasm. It is found in the nucleus. May play a role in ubiquitination and subsequent proteasomal degradation of target proteins. The chain is Protein SGT1 homolog from Bos taurus (Bovine).